Consider the following 198-residue polypeptide: CASP-like protein 4B3 (198 aa).

The segment at 1-27 is disordered; the sequence is MSSSGPPAGDGRDDASGPGPAGAAAAA. Residues 1-51 lie on the Cytoplasmic side of the membrane; it reads MSSSGPPAGDGRDDASGPGPAGAAAAADGSVPVSRSIVERWKMEPAAARAR. Residues 16–27 show a composition bias toward low complexity; the sequence is SGPGPAGAAAAA. The chain crosses the membrane as a helical span at residues 52-72; sequence LLLRAVAWLFSLLALVVMASN. The Extracellular segment spans residues 73–85; it reads KHGHGGAQDFDNY. The helical transmembrane segment at 86 to 106 threads the bilayer; it reads PEYTYCLGISIIAVLYTTAQV. Topologically, residues 107 to 124 are cytoplasmic; it reads TRDVHRLSWGRDVIAGRK. Residues 125-145 traverse the membrane as a helical segment; the sequence is AAAVVDFAGDQVVAYLLMSAL. The Extracellular portion of the chain corresponds to 146–166; the sequence is SAAAPVTDYMRQAADNLFTDS. Residues 167–187 form a helical membrane-spanning segment; it reads AAAAISMAFLAFLAAGLSALV. At 188–198 the chain is on the cytoplasmic side; the sequence is SGYNLAMEVLV.

This sequence belongs to the Casparian strip membrane proteins (CASP) family. As to quaternary structure, homodimer and heterodimers.

The protein resides in the cell membrane. The polypeptide is CASP-like protein 4B3 (Oryza sativa subsp. japonica (Rice)).